A 537-amino-acid chain; its full sequence is Chaperonin GroEL (537 aa).

Residues 30 to 33 (TLGP), 87 to 91 (DGTTT), Gly414, 477 to 479 (DAV), and Asp493 contribute to the ATP site.

The protein belongs to the chaperonin (HSP60) family. In terms of assembly, forms a cylinder of 14 subunits composed of two heptameric rings stacked back-to-back. Interacts with the co-chaperonin GroES.

It localises to the cytoplasm. It catalyses the reaction ATP + H2O + a folded polypeptide = ADP + phosphate + an unfolded polypeptide.. In terms of biological role, together with its co-chaperonin GroES, plays an essential role in assisting protein folding. The GroEL-GroES system forms a nano-cage that allows encapsulation of the non-native substrate proteins and provides a physical environment optimized to promote and accelerate protein folding. This is Chaperonin GroEL from Coprothermobacter proteolyticus (strain ATCC 35245 / DSM 5265 / OCM 4 / BT).